A 232-amino-acid chain; its full sequence is UPF0758 protein Clos_1766 (232 aa).

The MPN domain maps to 110 to 232 (KIKGPDDVSN…YFSMKEHKLI (123 aa)). Zn(2+) is bound by residues H181, H183, and D194. A JAMM motif motif is present at residues 181 to 194 (HNHPSGDPNPSGED).

This sequence belongs to the UPF0758 family.

This is UPF0758 protein Clos_1766 from Alkaliphilus oremlandii (strain OhILAs) (Clostridium oremlandii (strain OhILAs)).